An 833-amino-acid chain; its full sequence is Leucine--tRNA ligase (833 aa).

The 'HIGH' region signature appears at 41 to 52 (PYPSGAGLHVGH). The short motif at 610–614 (KMSKS) is the 'KMSKS' region element. Lysine 613 is an ATP binding site.

The protein belongs to the class-I aminoacyl-tRNA synthetase family.

It is found in the cytoplasm. The enzyme catalyses tRNA(Leu) + L-leucine + ATP = L-leucyl-tRNA(Leu) + AMP + diphosphate. This is Leucine--tRNA ligase from Streptococcus pyogenes serotype M28 (strain MGAS6180).